Consider the following 506-residue polypeptide: RNA-splicing ligase RtcB homolog (506 aa).

Residues aspartate 120, cysteine 123, histidine 228, histidine 260, and histidine 354 each contribute to the Mn(2+) site. Residue 227 to 231 (NHYAE) participates in GMP binding. GMP-binding positions include 354–355 (HN), 403–406 (GGSM), serine 410, 429–432 (HGAG), and lysine 505. Residue histidine 429 is the GMP-histidine intermediate of the active site.

It belongs to the RtcB family. In terms of assembly, catalytic component of the tRNA-splicing ligase complex. It depends on Mn(2+) as a cofactor.

The enzyme catalyses a 3'-end 3'-phospho-ribonucleotide-RNA + a 5'-end dephospho-ribonucleoside-RNA + GTP = a ribonucleotidyl-ribonucleotide-RNA + GMP + diphosphate. The catalysed reaction is a 3'-end 2',3'-cyclophospho-ribonucleotide-RNA + a 5'-end dephospho-ribonucleoside-RNA + GTP + H2O = a ribonucleotidyl-ribonucleotide-RNA + GMP + diphosphate + H(+). Functionally, catalytic subunit of the tRNA-splicing ligase complex that acts by directly joining spliced tRNA halves to mature-sized tRNAs by incorporating the precursor-derived splice junction phosphate into the mature tRNA as a canonical 3',5'-phosphodiester. May act as an RNA ligase with broad substrate specificity, and may function toward other RNAs. This is RNA-splicing ligase RtcB homolog from Anopheles gambiae (African malaria mosquito).